The following is a 427-amino-acid chain: 3-isopropylmalate dehydratase large subunit (427 aa).

Residues cysteine 308, cysteine 368, and cysteine 371 each contribute to the [4Fe-4S] cluster site.

Belongs to the aconitase/IPM isomerase family. LeuC type 2 subfamily. Heterodimer of LeuC and LeuD. The cofactor is [4Fe-4S] cluster.

It catalyses the reaction (2R,3S)-3-isopropylmalate = (2S)-2-isopropylmalate. The protein operates within amino-acid biosynthesis; L-leucine biosynthesis; L-leucine from 3-methyl-2-oxobutanoate: step 2/4. In terms of biological role, catalyzes the isomerization between 2-isopropylmalate and 3-isopropylmalate, via the formation of 2-isopropylmaleate. This is 3-isopropylmalate dehydratase large subunit from Citrifermentans bemidjiense (strain ATCC BAA-1014 / DSM 16622 / JCM 12645 / Bem) (Geobacter bemidjiensis).